The chain runs to 421 residues: Alpha-1-antiproteinase 2 (421 aa).

Residues 1–24 (MPSSVPWCLLLLAGLCCLVPSSLA) form the signal peptide. 3 N-linked (GlcNAc...) asparagine glycosylation sites follow: Asn-73, Asn-110, and Asn-274. The tract at residues 376-395 (GTTMWEIMPISLPPDLKFNR) is RCL.

It belongs to the serpin family. Post-translationally, N-glycosylated with carbohydrates having biantennary side chains. Plasma.

It localises to the secreted. Its function is as follows. Inhibitor of serine proteases. The chain is Alpha-1-antiproteinase 2 from Equus caballus (Horse).